The chain runs to 79 residues: Sec-independent protein translocase protein TatA (79 aa).

A helical membrane pass occupies residues 1-21; it reads MGGFTSIWHWVIVLLVIVLLF. Residues 48-79 form a disordered region; the sequence is EEEAKNEPKTLDAQATQTKVHESSEIKSKQES. A compositionally biased stretch (basic and acidic residues) spans 66–79; that stretch reads KVHESSEIKSKQES.

This sequence belongs to the TatA/E family. As to quaternary structure, the Tat system comprises two distinct complexes: a TatABC complex, containing multiple copies of TatA, TatB and TatC subunits, and a separate TatA complex, containing only TatA subunits. Substrates initially bind to the TatABC complex, which probably triggers association of the separate TatA complex to form the active translocon.

The protein resides in the cell inner membrane. Part of the twin-arginine translocation (Tat) system that transports large folded proteins containing a characteristic twin-arginine motif in their signal peptide across membranes. TatA could form the protein-conducting channel of the Tat system. The protein is Sec-independent protein translocase protein TatA of Helicobacter pylori (strain ATCC 700392 / 26695) (Campylobacter pylori).